We begin with the raw amino-acid sequence, 198 residues long: FMN-dependent NADH:quinone oxidoreductase (198 aa).

Residue 92 to 95 coordinates FMN; sequence MWNL.

Belongs to the azoreductase type 1 family. As to quaternary structure, homodimer. FMN is required as a cofactor.

The enzyme catalyses 2 a quinone + NADH + H(+) = 2 a 1,4-benzosemiquinone + NAD(+). It catalyses the reaction N,N-dimethyl-1,4-phenylenediamine + anthranilate + 2 NAD(+) = 2-(4-dimethylaminophenyl)diazenylbenzoate + 2 NADH + 2 H(+). In terms of biological role, quinone reductase that provides resistance to thiol-specific stress caused by electrophilic quinones. Its function is as follows. Also exhibits azoreductase activity. Catalyzes the reductive cleavage of the azo bond in aromatic azo compounds to the corresponding amines. This is FMN-dependent NADH:quinone oxidoreductase from Clostridium beijerinckii (strain ATCC 51743 / NCIMB 8052) (Clostridium acetobutylicum).